We begin with the raw amino-acid sequence, 337 residues long: Calcium-binding protein 39-like (337 aa).

This sequence belongs to the Mo25 family. As to quaternary structure, component of a trimeric complex composed of STK11/LKB1, STRAD (STRADA or STRADB) and CAB39/MO25 (CAB39/MO25alpha or CAB39L/MO25beta): the complex tethers STK11/LKB1 in the cytoplasm and stimulates its catalytic activity.

Component of a complex that binds and activates STK11/LKB1. In the complex, required to stabilize the interaction between CAB39/MO25 (CAB39/MO25alpha or CAB39L/MO25beta) and STK11/LKB1. The sequence is that of Calcium-binding protein 39-like (Cab39l) from Mus musculus (Mouse).